The following is a 478-amino-acid chain: MKAFLNEQFLLNSPTAEKLYHEFAKDLPIIDYHCHLSPKDIYENKTFRNITEAWLYGDHYKWRAMRANGIPETHVTGDASDYDKFLAWAKTVPMTIGNPLYHWTHLELRRYFEVQDLLNEKNADTIWQKVNEKLQEEGFGARDFIMKSNVETVVTTDDPIDSLQYHQKLREEGFSVQVLPGFRPDKALDIANDLFEKYVHELAEASAISIQSYQDFLNALRARIDFFHEHGCLISDHAINEMTYEETTQEEVETIFHKRMSGYPLTEKEKIKFKTETFIMLGQAYCERGWAMQLHINALRNNNTKMFERLGPDTGYDAMNDEDIAKPLCRILDRLEQEDALPNTILYSLNPRDNVVISTLAGSFQDGKTPGKMQHGTAWWFNDTKQGMTEQMMTLSSIGLISRFIGMLTDSRSFLSYTRHEYFRRLLCDIIGDWVEKGEVPYDLELLGEIVKGISYENAKQYFQFDRVKQLHHQSKIT.

The protein belongs to the metallo-dependent hydrolases superfamily. Uronate isomerase family.

It carries out the reaction D-glucuronate = D-fructuronate. It catalyses the reaction aldehydo-D-galacturonate = keto-D-tagaturonate. It participates in carbohydrate metabolism; pentose and glucuronate interconversion. This Bacillus pumilus (strain SAFR-032) protein is Uronate isomerase.